Reading from the N-terminus, the 696-residue chain is C2 domain-containing protein 2 (696 aa).

A helical transmembrane segment spans residues 13–33; the sequence is AQWLALVSLFVAALATVGLYL. The SMP-LBD domain occupies 51-242; that stretch reads EPGEGPRPGS…PTTVKEAQNL (192 aa). Ser60 is subject to Phosphoserine. One can recognise a C2 domain in the interval 245–362; sequence AASTAQESCP…KKQPSGPQSF (118 aa). Phosphoserine is present on residues Ser435 and Ser441. Thr445 is modified (phosphothreonine). Residues 539–580 form a disordered region; sequence VDSTHQEDAPSHPERAAASAPPEEAESAQASLAPKPQEDELD. Residues 542–553 show a composition bias toward basic and acidic residues; it reads THQEDAPSHPER. The span at 554 to 572 shows a compositional bias: low complexity; that stretch reads AAASAPPEEAESAQASLAP. The residue at position 581 (Ser581) is a Phosphoserine.

Its subcellular location is the membrane. The polypeptide is C2 domain-containing protein 2 (C2CD2) (Homo sapiens (Human)).